We begin with the raw amino-acid sequence, 720 residues long: Iron-sulfur clusters transporter ATM1, mitochondrial (720 aa).

The transit peptide at 1-36 directs the protein to the mitochondrion; that stretch reads MIMFRSLSVTPVWKAGLSLSHRSIPINSRLSSVRNY. Residues 37–129 lie on the Mitochondrial matrix side of the membrane; sequence ISIGCANKTG…PSGDNKVKIR (93 aa). Residues 64–77 show a composition bias toward polar residues; sequence RFNSSSNGNGTDKN. The tract at residues 64–102 is disordered; it reads RFNSSSNGNGTDKNASVAPKTEVKKIVPPKPSTNGKSKT. A helical transmembrane segment spans residues 130–151; it reads VLIALALLIGAKLLNVQVPFFF. The 292-residue stretch at 130 to 421 folds into the ABC transmembrane type-1 domain; sequence VLIALALLIG…LGSVYRELKQ (292 aa). The Mitochondrial intermembrane segment spans residues 152–175; it reads KQTIDSMNIEWGPDVATVLPVAIT. The helical transmembrane segment at 176-199 threads the bilayer; that stretch reads MTILSYGAARFGAVMFGELRNAVF. Topologically, residues 200-248 are mitochondrial matrix; it reads AKVAQNAIRKVSLQTFQHLMKLDLGWHLSRQTGGLTRAMDRGTKGISYV. A helical membrane pass occupies residues 249–272; the sequence is LSAMVFHMIPITFEISVVCGILTY. Glutamine 273 is a topological domain (mitochondrial intermembrane). A helical transmembrane segment spans residues 274 to 294; it reads FGSSFAAMTFVTMLLYSFFTF. The Mitochondrial matrix portion of the chain corresponds to 295–360; that stretch reads KTTAWRTEFR…SQIKVAQSLA (66 aa). Glutathione contacts are provided by residues 300–304 and 363–366; these read RTEFR and NAGQ. A helical membrane pass occupies residues 361–379; that stretch reads FLNAGQNFIFTSALTAMMY. Residues 380–394 are Mitochondrial intermembrane-facing; that stretch reads MGASGVMEGALTVGD. A helical transmembrane segment spans residues 395-416; the sequence is LVLINQLVFQLSVPLNFLGSVY. Glycine 413 serves as a coordination point for glutathione. At 417 to 720 the chain is on the mitochondrial matrix side; it reads RELKQSLIDM…EKEPRTSKKD (304 aa). Residues 456-692 enclose the ABC transporter domain; sequence IKFENVTFGY…PNSLYSELWN (237 aa). Residues tyrosine 465 and 489-500 each bind ATP; that span reads GPSGSGKSTILR.

The protein belongs to the ABC transporter superfamily. ABCB family. Heavy Metal importer (TC 3.A.1.210) subfamily. In terms of assembly, homodimer.

The protein localises to the mitochondrion inner membrane. In terms of biological role, performs an essential function in the generation of cytoplasmic iron-sulfur proteins by mediating the ATP-dependent export of Fe/S cluster precursors synthesized by NFS1 and other mitochondrial proteins. Hydrolyzes ATP. Binds glutathione and may function by transporting a glutathione-conjugated iron-sulfur compound. In Kluyveromyces lactis (strain ATCC 8585 / CBS 2359 / DSM 70799 / NBRC 1267 / NRRL Y-1140 / WM37) (Yeast), this protein is Iron-sulfur clusters transporter ATM1, mitochondrial.